A 213-amino-acid polypeptide reads, in one-letter code: Putative manganese efflux pump MntP (213 aa).

The next 6 helical transmembrane spans lie at I3 to A23, A36 to G56, A67 to E87, L130 to I150, I152 to I172, and I187 to I207.

This sequence belongs to the MntP (TC 9.B.29) family.

The protein resides in the cell membrane. Probably functions as a manganese efflux pump. This chain is Putative manganese efflux pump MntP, found in Clostridium perfringens (strain SM101 / Type A).